The primary structure comprises 119 residues: Large ribosomal subunit protein bL20 (119 aa).

This sequence belongs to the bacterial ribosomal protein bL20 family.

Its function is as follows. Binds directly to 23S ribosomal RNA and is necessary for the in vitro assembly process of the 50S ribosomal subunit. It is not involved in the protein synthesizing functions of that subunit. The polypeptide is Large ribosomal subunit protein bL20 (Nitrosomonas europaea (strain ATCC 19718 / CIP 103999 / KCTC 2705 / NBRC 14298)).